The primary structure comprises 347 residues: UDP-N-acetylglucosamine--N-acetylmuramyl-(pentapeptide) pyrophosphoryl-undecaprenol N-acetylglucosamine transferase (347 aa).

UDP-N-acetyl-alpha-D-glucosamine contacts are provided by residues 11–13, Asn-122, Arg-163, Ser-189, and Gln-279; that span reads TGG.

It belongs to the glycosyltransferase 28 family. MurG subfamily.

Its subcellular location is the cell inner membrane. It carries out the reaction di-trans,octa-cis-undecaprenyl diphospho-N-acetyl-alpha-D-muramoyl-L-alanyl-D-glutamyl-meso-2,6-diaminopimeloyl-D-alanyl-D-alanine + UDP-N-acetyl-alpha-D-glucosamine = di-trans,octa-cis-undecaprenyl diphospho-[N-acetyl-alpha-D-glucosaminyl-(1-&gt;4)]-N-acetyl-alpha-D-muramoyl-L-alanyl-D-glutamyl-meso-2,6-diaminopimeloyl-D-alanyl-D-alanine + UDP + H(+). It participates in cell wall biogenesis; peptidoglycan biosynthesis. Functionally, cell wall formation. Catalyzes the transfer of a GlcNAc subunit on undecaprenyl-pyrophosphoryl-MurNAc-pentapeptide (lipid intermediate I) to form undecaprenyl-pyrophosphoryl-MurNAc-(pentapeptide)GlcNAc (lipid intermediate II). This Sulfurihydrogenibium sp. (strain YO3AOP1) protein is UDP-N-acetylglucosamine--N-acetylmuramyl-(pentapeptide) pyrophosphoryl-undecaprenol N-acetylglucosamine transferase.